Consider the following 329-residue polypeptide: Bifunctional nuclease 2 (329 aa).

The region spanning 121 to 256 is the BFN domain; it reads CVHNNPQGGN…YLAYSDGMRV (136 aa). The region spanning 287–322 is the UVR domain; that stretch reads DTKEFDLVRNMMQAVDEERYDEAAEWRDKLGKFQAK.

The protein belongs to the bifunctional nuclease family.

It localises to the nucleus. Functionally, bifunctional nuclease with both RNase and DNase activities. Involved in basal defense response. Participates in abscisic acid-derived callose deposition following infection by a necrotrophic pathogen. This is Bifunctional nuclease 2 (BBD2) from Arabidopsis thaliana (Mouse-ear cress).